A 443-amino-acid chain; its full sequence is MSKTLYQKIYDSHVVCEDKNNTSILYIDLHLLHEVTSPQAFDSLRNKKRKVRQVNKTFATMDHNVSTQIKNINASGSMAKKQMEQLIKNCQEFNISLYDINNPNQGIVHVIAPEKGMTLPGMTIVCGDSHTSTHGAFGALSFGIGTSEVEHVLATQTLKQKRFKNMKIEIVGEIPKFVTAKDIILFIIGKLGSSSGTGYVIEFCGNVVKKMSMEERMTVCNMAIEMGAKSGLIAPDEITYEYLKNKMYSPYGIFWKNSLDYWRFLKSDSDAQFDKYFTIDISNLAPQITWGTNPDQVISINEKIPDYNKIDSLVKKDAAKSACKYMGLRSDTYLTNISIDRVFIGSCTNARIEDLRSASVILKNKKIANHVKAIVVPGSGLVKKQAEKEGLDKIFIDSGFEWRLPGCSMCLGMNKDRLNFQERCASHSNRNFEGRQGRGGRTH.

The [4Fe-4S] cluster site is built by Cys347, Cys407, and Cys410.

Belongs to the aconitase/IPM isomerase family. LeuC type 1 subfamily. Heterodimer of LeuC and LeuD. The cofactor is [4Fe-4S] cluster.

It carries out the reaction (2R,3S)-3-isopropylmalate = (2S)-2-isopropylmalate. It participates in amino-acid biosynthesis; L-leucine biosynthesis; L-leucine from 3-methyl-2-oxobutanoate: step 2/4. Functionally, catalyzes the isomerization between 2-isopropylmalate and 3-isopropylmalate, via the formation of 2-isopropylmaleate. In Buchnera aphidicola subsp. Uroleucon obscurum, this protein is 3-isopropylmalate dehydratase large subunit.